A 558-amino-acid polypeptide reads, in one-letter code: MLVANYSSDSEEQENSQSPNIQPLLHTENLAPAVVDNVKDDLIVSKGGNSRELARNVPVNEMVQPALGPANPFVTKEQDSIKNSITGYAEREYVPNFVFNQEYYANTHAIYGKRNFDDNEATTSTDLKRKSQKIKERREDPGDPSILEGDGAYKGPWAGYGSEQSSSPLEYSEYEEVESLDVKSEKDTESNNLGQNELLKEQLATPEVETHRSKEETILHKDRLFDYQNRSYMHVPNDVGINLSEEPGEQTCYIPKKHIFTWKGHTKGISCLRFFPISGHLLLSGSMDNQIKIWEVYHDRSLLRTFQGHARPIRDLSFSQDGRSFLSTSFDKTIKLWDTELGKCLNCFNSDRLTNCVKFQVDPDKPNEFLAGTADKRILQFDIRSPDIVQAYDHHLGGINSITFLENGKRFVTTSDDSSMRFWEYGTPVPIKFVADIAMHSMPRVALRPNGKSIACQSLDNCIYVYSAYEKYRQNKKKVFKGYSCSGYSLEVGFSPDGRFVFSGDSSGNACFWDWKTCKLMAKLPAHSGPVQSMAFHPQETSKVATSSIVDGSIKYWD.

Disordered stretches follow at residues 1–23 (MLVA…NIQP) and 117–197 (DDNE…GQNE). Positions 126–141 (DLKRKSQKIKERREDP) are enriched in basic and acidic residues. The segment covering 162–171 (SEQSSSPLEY) has biased composition (low complexity). Basic and acidic residues predominate over residues 180–189 (LDVKSEKDTE). WD repeat units lie at residues 264-304 (GHTK…SLLR), 308-349 (GHAR…NCFN), 351-391 (DRLT…IVQA), 394-433 (HHLG…PIKF), 437-476 (IAMH…RQNK), 484-523 (SCSG…LMAK), and 526-558 (AHSG…KYWD).

As to quaternary structure, belongs to the 40S cdc5-associated complex (or cwf complex), a spliceosome sub-complex reminiscent of a late-stage spliceosome composed of the U2, U5 and U6 snRNAs and at least brr2, cdc5, cwf2/prp3, cwf3/syf1, cwf4/syf3, cwf5/ecm2, spp42/cwf6, cwf7/spf27, cwf8, cwf9, cwf10, cwf11, cwf12, prp45/cwf13, cwf14, cwf15, cwf16, cwf17, cwf18, cwf19, cwf20, cwf21, cwf22, cwf23, cwf24, cwf25, cwf26, cyp7/cwf27, cwf28, cwf29/ist3, lea1, msl1, prp5/cwf1, prp10, prp12/sap130, prp17, prp22, sap61, sap62, sap114, sap145, slu7, smb1, smd1, smd3, smf1, smg1 and syf2.

Its subcellular location is the nucleus. In terms of biological role, functions in the second step of pre-mRNA splicing. Involved in splicing intron which are longer than 200 nucleotides. The chain is Pre-mRNA-processing factor 17 (prp17) from Schizosaccharomyces pombe (strain 972 / ATCC 24843) (Fission yeast).